The sequence spans 1222 residues: ATP-dependent helicase/nuclease subunit A (1222 aa).

The 457-residue stretch at 39 to 495 (QKRTAQQIEA…ILLKENFRSQ (457 aa)) folds into the UvrD-like helicase ATP-binding domain. 60-67 (ASAGSGKT) provides a ligand contact to ATP. One can recognise a UvrD-like helicase C-terminal domain in the interval 524–810 (QLIAGSHAQT…NLMTIHKSKG (287 aa)).

The protein belongs to the helicase family. AddA subfamily. Heterodimer of AddA and AddB/RexB. It depends on Mg(2+) as a cofactor.

It carries out the reaction Couples ATP hydrolysis with the unwinding of duplex DNA by translocating in the 3'-5' direction.. It catalyses the reaction ATP + H2O = ADP + phosphate + H(+). Functionally, the heterodimer acts as both an ATP-dependent DNA helicase and an ATP-dependent, dual-direction single-stranded exonuclease. Recognizes the chi site generating a DNA molecule suitable for the initiation of homologous recombination. The AddA nuclease domain is required for chi fragment generation; this subunit has the helicase and 3' -&gt; 5' nuclease activities. This Streptococcus pyogenes serotype M2 (strain MGAS10270) protein is ATP-dependent helicase/nuclease subunit A.